The sequence spans 263 residues: Small ribosomal subunit protein eS4, Y isoform 2 (263 aa).

One can recognise an S4 RNA-binding domain in the interval 42-104; it reads LPLIVFLRNR…TGEHFRLVYD (63 aa).

Belongs to the eukaryotic ribosomal protein eS4 family.

This is Small ribosomal subunit protein eS4, Y isoform 2 (RPS4Y2) from Pan troglodytes (Chimpanzee).